Reading from the N-terminus, the 619-residue chain is Isocitrate dehydrogenase kinase/phosphatase (619 aa).

ATP contacts are provided by residues 354–360 and lysine 375; that span reads APGIRGM. Residue aspartate 409 is part of the active site.

It belongs to the AceK family.

It is found in the cytoplasm. It carries out the reaction L-seryl-[isocitrate dehydrogenase] + ATP = O-phospho-L-seryl-[isocitrate dehydrogenase] + ADP + H(+). In terms of biological role, bifunctional enzyme which can phosphorylate or dephosphorylate isocitrate dehydrogenase (IDH) on a specific serine residue. This is a regulatory mechanism which enables bacteria to bypass the Krebs cycle via the glyoxylate shunt in response to the source of carbon. When bacteria are grown on glucose, IDH is fully active and unphosphorylated, but when grown on acetate or ethanol, the activity of IDH declines drastically concomitant with its phosphorylation. The sequence is that of Isocitrate dehydrogenase kinase/phosphatase from Bordetella bronchiseptica (strain ATCC BAA-588 / NCTC 13252 / RB50) (Alcaligenes bronchisepticus).